Reading from the N-terminus, the 151-residue chain is Glycine and methionine-rich protein (151 aa).

Residues 1–19 (MKTAVVLAAFSALMALARA) form the signal peptide.

Component of the acid-insoluble and acid-soluble organic matrix of calcified layers of the shell (at protein level).

It localises to the secreted. The protein is Glycine and methionine-rich protein of Lottia gigantea (Giant owl limpet).